Here is a 269-residue protein sequence, read N- to C-terminus: uncharacterized protein (269 aa).

ATP-binding positions include 12–19 (GKGGTGKS) and 130–137 (GYLIVGKS).

The protein to M.jannaschii MJ0578.

This is an uncharacterized protein from Methanocaldococcus jannaschii (strain ATCC 43067 / DSM 2661 / JAL-1 / JCM 10045 / NBRC 100440) (Methanococcus jannaschii).